The following is a 350-amino-acid chain: UDP-glucose 4-epimerase 2 (350 aa).

Residues 12 to 14 (GYI), 33 to 37 (DNYDN), 63 to 64 (DL), F85, and K89 each bind NAD(+). A substrate-binding site is contributed by 129–131 (SAT). Y153 acts as the Proton acceptor in catalysis. 2 residues coordinate NAD(+): K157 and Y181. Residues 181–183 (YFN), 202–204 (NNL), 220–222 (TVF), R235, and 297–300 (RPGD) each bind substrate.

This sequence belongs to the NAD(P)-dependent epimerase/dehydratase family. Forms homodimers and heterodimers. It depends on NAD(+) as a cofactor. As to expression, widely expressed. Most highly expressed in stems and flowers.

It is found in the cytoplasm. The enzyme catalyses UDP-alpha-D-glucose = UDP-alpha-D-galactose. It functions in the pathway carbohydrate metabolism; galactose metabolism. Enhanced activity by NaCl. Enhanced activity by NAD(+). Strongly inhibited by UDP. In terms of biological role, catalyzes the interconversion between UDP-glucose and UDP-galactose. Cooperates with UGE3 in pollen development and with UGE4 in cell wall carbohydrate biosynthesis and growth. In Arabidopsis thaliana (Mouse-ear cress), this protein is UDP-glucose 4-epimerase 2.